Consider the following 79-residue polypeptide: Cytochrome b (79 aa).

The next 3 helical transmembrane spans lie at 1 to 7, 31 to 52, and 67 to 79; these read SALFLAM, WLIR…YLHI, and WNIG…LTMA. Residues His37 and His51 each contribute to the heme b site.

Belongs to the cytochrome b family. As to quaternary structure, the cytochrome bc1 complex contains 11 subunits: 3 respiratory subunits (MT-CYB, CYC1 and UQCRFS1), 2 core proteins (UQCRC1 and UQCRC2) and 6 low-molecular weight proteins (UQCRH/QCR6, UQCRB/QCR7, UQCRQ/QCR8, UQCR10/QCR9, UQCR11/QCR10 and a cleavage product of UQCRFS1). This cytochrome bc1 complex then forms a dimer. Requires heme b as cofactor.

The protein localises to the mitochondrion inner membrane. Functionally, component of the ubiquinol-cytochrome c reductase complex (complex III or cytochrome b-c1 complex) that is part of the mitochondrial respiratory chain. The b-c1 complex mediates electron transfer from ubiquinol to cytochrome c. Contributes to the generation of a proton gradient across the mitochondrial membrane that is then used for ATP synthesis. The polypeptide is Cytochrome b (MT-CYB) (Dipodomys panamintinus (Panamint kangaroo rat)).